A 376-amino-acid polypeptide reads, in one-letter code: Alcohol dehydrogenase class-3 (376 aa).

Residues Cys47, His69, Cys99, Cys102, Cys105, Cys113, and Cys176 each coordinate Zn(2+).

It belongs to the zinc-containing alcohol dehydrogenase family. Class-III subfamily. As to quaternary structure, homodimer. Zn(2+) serves as cofactor. As to expression, expressed in the skeletal muscle, heart, gill filaments and liver, with highest levels in the kidney.

Its subcellular location is the cytoplasm. The catalysed reaction is a primary alcohol + NAD(+) = an aldehyde + NADH + H(+). It catalyses the reaction a secondary alcohol + NAD(+) = a ketone + NADH + H(+). The enzyme catalyses S-(hydroxymethyl)glutathione + NADP(+) = S-formylglutathione + NADPH + H(+). It carries out the reaction S-(hydroxymethyl)glutathione + NAD(+) = S-formylglutathione + NADH + H(+). The catalysed reaction is S-nitrosoglutathione + NADH + H(+) = S-(hydroxysulfenamide)glutathione + NAD(+). Class-III ADH is remarkably ineffective in oxidizing ethanol, but it readily catalyzes the oxidation of long-chain primary alcohols and the oxidation of S-(hydroxymethyl) glutathione. Also acts as a S-nitroso-glutathione reductase by catalyzing the NADH-dependent reduction of S-nitrosoglutathione, thereby regulating protein S-nitrosylation. The polypeptide is Alcohol dehydrogenase class-3 (Sparus aurata (Gilthead sea bream)).